Here is a 650-residue protein sequence, read N- to C-terminus: 1-deoxy-D-xylulose-5-phosphate synthase (650 aa).

Residues His-73 and 113–115 each bind thiamine diphosphate; that span reads SHA. Asp-145 contacts Mg(2+). Residues 146 to 147, Asn-175, Tyr-287, and Glu-369 each bind thiamine diphosphate; that span reads GA. Mg(2+) is bound at residue Asn-175.

The protein belongs to the transketolase family. DXPS subfamily. Homodimer. Mg(2+) serves as cofactor. The cofactor is thiamine diphosphate.

It carries out the reaction D-glyceraldehyde 3-phosphate + pyruvate + H(+) = 1-deoxy-D-xylulose 5-phosphate + CO2. It participates in metabolic intermediate biosynthesis; 1-deoxy-D-xylulose 5-phosphate biosynthesis; 1-deoxy-D-xylulose 5-phosphate from D-glyceraldehyde 3-phosphate and pyruvate: step 1/1. Functionally, catalyzes the acyloin condensation reaction between C atoms 2 and 3 of pyruvate and glyceraldehyde 3-phosphate to yield 1-deoxy-D-xylulose-5-phosphate (DXP). In Leifsonia xyli subsp. xyli (strain CTCB07), this protein is 1-deoxy-D-xylulose-5-phosphate synthase.